The sequence spans 425 residues: Nicotinate dehydrogenase large molybdopterin subunit (425 aa).

Residues Gln-208 and 238-240 (GFG) each bind Se-Mo-molybdopterin cytosine dinucleotide.

It belongs to the xanthine dehydrogenase family. As to quaternary structure, heterooctamer of NDHM, NDHL, NDHS and NDHF. Dimer of heterotetramers. Se-Mo-molybdopterin cytosine dinucleotide is required as a cofactor.

The catalysed reaction is nicotinate + NADP(+) + H2O = 6-hydroxynicotinate + NADPH + H(+). It functions in the pathway cofactor degradation; nicotinate degradation; 6-hydroxynicotinate from nicotinate: step 1/1. With respect to regulation, reversibly inactivated by selenide and sulfide. Not inhibited by cyanide. Its function is as follows. Catalyzes the hydroxylation of nicotinate to 6-hydroxynicotinate. Also active against 2-pyrazinecarboxylic acid, but inactive against other nicotinate analogs. This chain is Nicotinate dehydrogenase large molybdopterin subunit (ndhL), found in Eubacterium barkeri (Clostridium barkeri).